A 456-amino-acid chain; its full sequence is MGLFTDLVLYGIVLPALPFIMRNRFHIPNAELQHYTSGFLATYAGASVFFSVPAGWAASKLGSRQLFLGGLVFLFVATAIFAFSTSLALLVVSRLLQGMSTAVVWTAGLDMVQDTVDPSQIGVTIGTIFATISVGELAAPVLGGVLYERGGIAAVFAVSAVMLAIDLGLRGLVIDKKAAVKFESPCLIRSSAERSDHVASAPTVVEAQERTHEGTPLLPQDDDDDSDRYKIDRELGSIVQAIPLLYCFREPRLHLAMLLSFVQALFIGTFDATVPTEAESLFHFSSLQVGLVFIALMLPYFALGRLAGQAVDRFGTKAAATSGYAFLVPCLLLLGLPEKKLVSKEANVALFCTILALNGIGLAVVTSPGYVEAIDVTTKYQVANPGHFGENGPYAQLFGFSSLYFFTGLAVGPLLGGVLRAKFGYAVMGAVYAAISGVTAIVSFLFVGTRRGVCWG.

Transmembrane regions (helical) follow at residues 1 to 21 (MGLF…PFIM), 38 to 58 (GFLA…GWAA), 72 to 92 (VFLF…LLVV), 125 to 145 (IGTI…LGGV), and 154 to 174 (AVFA…GLVI). The disordered stretch occupies residues 206-225 (EAQERTHEGTPLLPQDDDDD). 6 helical membrane-spanning segments follow: residues 255-275 (LAML…ATVP), 284-304 (FSSL…FALG), 318-338 (AAAT…GLPE), 348-368 (VALF…VTSP), 398-418 (FGFS…LGGV), and 427-447 (VMGA…FLFV).

The protein belongs to the major facilitator superfamily. TCR/Tet family.

It localises to the membrane. In terms of biological role, MFS-type transporter; part of the gene cluster that mediates the biosynthesis of pyrrolopyrazines, secondary metabolites showing insecticidal activity. Probably involved in the secretion of peramine and other pyrrolopyrazines. This is MFS-type transporter ppzB (ppzB) from Metarhizium majus (strain ARSEF 297).